The chain runs to 284 residues: UPF0294 protein VV2535 (284 aa).

Belongs to the UPF0294 family.

The protein localises to the cytoplasm. This chain is UPF0294 protein VV2535, found in Vibrio vulnificus (strain YJ016).